The chain runs to 422 residues: Histidine--tRNA ligase (422 aa).

The protein belongs to the class-II aminoacyl-tRNA synthetase family. Homodimer.

The protein localises to the cytoplasm. The catalysed reaction is tRNA(His) + L-histidine + ATP = L-histidyl-tRNA(His) + AMP + diphosphate + H(+). This chain is Histidine--tRNA ligase, found in Ruthia magnifica subsp. Calyptogena magnifica.